We begin with the raw amino-acid sequence, 124 residues long: Large ribosomal subunit protein bL21 (124 aa).

This sequence belongs to the bacterial ribosomal protein bL21 family. In terms of assembly, part of the 50S ribosomal subunit. Contacts protein L20.

In terms of biological role, this protein binds to 23S rRNA in the presence of protein L20. The protein is Large ribosomal subunit protein bL21 of Synechocystis sp. (strain ATCC 27184 / PCC 6803 / Kazusa).